Here is a 464-residue protein sequence, read N- to C-terminus: Bifunctional protein GlmU (464 aa).

The interval 1 to 231 (MDVVIMAAGK…ATQVAGVNSP (231 aa)) is pyrophosphorylase. UDP-N-acetyl-alpha-D-glucosamine is bound by residues lysine 20, glutamine 78, 83–84 (GT), 105–107 (SGD), glycine 142, glutamate 156, and asparagine 229. Aspartate 107 contacts Mg(2+). Asparagine 229 contributes to the Mg(2+) binding site. Positions 232–252 (VQLAALERAFQSKVALQLMEQ) are linker. An N-acetyltransferase region spans residues 253–464 (GVRLADPARL…SIANWKRPSK (212 aa)). The UDP-N-acetyl-alpha-D-glucosamine site is built by arginine 343 and lysine 361. Residue histidine 373 is the Proton acceptor of the active site. Tyrosine 376 and asparagine 387 together coordinate UDP-N-acetyl-alpha-D-glucosamine. Residues alanine 390, 396–397 (NY), serine 415, glycine 433, and arginine 450 contribute to the acetyl-CoA site.

In the N-terminal section; belongs to the N-acetylglucosamine-1-phosphate uridyltransferase family. It in the C-terminal section; belongs to the transferase hexapeptide repeat family. As to quaternary structure, homotrimer. Requires Mg(2+) as cofactor.

It is found in the cytoplasm. It carries out the reaction alpha-D-glucosamine 1-phosphate + acetyl-CoA = N-acetyl-alpha-D-glucosamine 1-phosphate + CoA + H(+). It catalyses the reaction N-acetyl-alpha-D-glucosamine 1-phosphate + UTP + H(+) = UDP-N-acetyl-alpha-D-glucosamine + diphosphate. Its pathway is nucleotide-sugar biosynthesis; UDP-N-acetyl-alpha-D-glucosamine biosynthesis; N-acetyl-alpha-D-glucosamine 1-phosphate from alpha-D-glucosamine 6-phosphate (route II): step 2/2. It participates in nucleotide-sugar biosynthesis; UDP-N-acetyl-alpha-D-glucosamine biosynthesis; UDP-N-acetyl-alpha-D-glucosamine from N-acetyl-alpha-D-glucosamine 1-phosphate: step 1/1. The protein operates within bacterial outer membrane biogenesis; LPS lipid A biosynthesis. Functionally, catalyzes the last two sequential reactions in the de novo biosynthetic pathway for UDP-N-acetylglucosamine (UDP-GlcNAc). The C-terminal domain catalyzes the transfer of acetyl group from acetyl coenzyme A to glucosamine-1-phosphate (GlcN-1-P) to produce N-acetylglucosamine-1-phosphate (GlcNAc-1-P), which is converted into UDP-GlcNAc by the transfer of uridine 5-monophosphate (from uridine 5-triphosphate), a reaction catalyzed by the N-terminal domain. This Albidiferax ferrireducens (strain ATCC BAA-621 / DSM 15236 / T118) (Rhodoferax ferrireducens) protein is Bifunctional protein GlmU.